Consider the following 313-residue polypeptide: Olfactory receptor 1J1 (313 aa).

Over 1–25 the chain is Extracellular; it reads MRLKNHSSVSEFLLLGFPIRPEQGG. An N-linked (GlcNAc...) asparagine glycan is attached at N5. Residues 26-46 traverse the membrane as a helical segment; that stretch reads IFFSLFLAMYLITVLGNLLII. Residues 47 to 57 lie on the Cytoplasmic side of the membrane; that stretch reads LLIRLDSHLHT. Residues 58–78 form a helical membrane-spanning segment; that stretch reads PMYFFLSHLAFTDISFSSVTV. At 79–97 the chain is on the extracellular side; sequence PKMLTKVQNQPIPITYEEC. C97 and C189 are oxidised to a cystine. A helical membrane pass occupies residues 98-118; it reads VSQTYFFIFFADLDSFLITSM. Over 119–142 the chain is Cytoplasmic; that stretch reads AYDRYMAICHPLHYITIMSQSRCA. A helical transmembrane segment spans residues 143–163; it reads MLVAVSWVIASACALLHSLLL. Residues 164–196 are Extracellular-facing; sequence DQLSFCADHTVPHFFCDLGALLKLSCSDTSLNQ. Residues 197–217 form a helical membrane-spanning segment; sequence LVIFTAGLAAIMLPFLCILIS. Over 218–240 the chain is Cytoplasmic; it reads YGRIGFTILQVPTTKGICKALST. A helical transmembrane segment spans residues 241-261; that stretch reads CGSHLSVVALYYGSIIGLYFL. Topologically, residues 262–271 are extracellular; that stretch reads PPSNSKINNN. The chain crosses the membrane as a helical span at residues 272 to 292; that stretch reads IVASVMYTVVTPMLNPFIYSL. The Cytoplasmic portion of the chain corresponds to 293–313; the sequence is RNKDMKGALKKLLSKKTEFSK.

The protein belongs to the G-protein coupled receptor 1 family.

Its subcellular location is the cell membrane. In terms of biological role, odorant receptor. The sequence is that of Olfactory receptor 1J1 from Mus musculus (Mouse).